The chain runs to 178 residues: ATP synthase subunit delta (178 aa).

Belongs to the ATPase delta chain family. F-type ATPases have 2 components, F(1) - the catalytic core - and F(0) - the membrane proton channel. F(1) has five subunits: alpha(3), beta(3), gamma(1), delta(1), epsilon(1). F(0) has three main subunits: a(1), b(2) and c(10-14). The alpha and beta chains form an alternating ring which encloses part of the gamma chain. F(1) is attached to F(0) by a central stalk formed by the gamma and epsilon chains, while a peripheral stalk is formed by the delta and b chains.

Its subcellular location is the cell inner membrane. Its function is as follows. F(1)F(0) ATP synthase produces ATP from ADP in the presence of a proton or sodium gradient. F-type ATPases consist of two structural domains, F(1) containing the extramembraneous catalytic core and F(0) containing the membrane proton channel, linked together by a central stalk and a peripheral stalk. During catalysis, ATP synthesis in the catalytic domain of F(1) is coupled via a rotary mechanism of the central stalk subunits to proton translocation. This protein is part of the stalk that links CF(0) to CF(1). It either transmits conformational changes from CF(0) to CF(1) or is implicated in proton conduction. The chain is ATP synthase subunit delta from Nitrosomonas eutropha (strain DSM 101675 / C91 / Nm57).